An 842-amino-acid chain; its full sequence is Circularly permutated Ras protein 1 (842 aa).

Residues 62 to 66 (DTAGQ), 121 to 124 (NKVD), and 181 to 188 (GGGGVGKS) each bind GTP. A disordered region spans residues 253–274 (SGKDKQPSPQQAASPSTIDRTG). Positions 259 to 274 (PSPQQAASPSTIDRTG) are enriched in polar residues. One can recognise a VWFA domain in the interval 377–627 (IIIYCIDVSG…TQNPMIATDV (251 aa)).

Belongs to the small GTPase superfamily. CpRas family.

This is Circularly permutated Ras protein 1 (cpras1) from Dictyostelium discoideum (Social amoeba).